An 89-amino-acid polypeptide reads, in one-letter code: Probable Fe(2+)-trafficking protein (89 aa).

The protein belongs to the Fe(2+)-trafficking protein family.

Could be a mediator in iron transactions between iron acquisition and iron-requiring processes, such as synthesis and/or repair of Fe-S clusters in biosynthetic enzymes. This chain is Probable Fe(2+)-trafficking protein, found in Hahella chejuensis (strain KCTC 2396).